The following is a 409-amino-acid chain: Outer membrane protein assembly factor BamB (409 aa).

Positions 1-34 are cleaved as a signal peptide; it reads MAGNILLLILDYVFHAGSRTLRVCILSLLILLSG. Cys35 is lipidated: N-palmitoyl cysteine. A lipid anchor (S-diacylglycerol cysteine) is attached at Cys35.

This sequence belongs to the BamB family. Part of the Bam complex.

The protein resides in the cell outer membrane. Its function is as follows. Part of the outer membrane protein assembly complex, which is involved in assembly and insertion of beta-barrel proteins into the outer membrane. This Nitrosomonas eutropha (strain DSM 101675 / C91 / Nm57) protein is Outer membrane protein assembly factor BamB.